The primary structure comprises 176 residues: MNKRDELIGLCIDFLAKVKDKTANANIERWLNENYGPDSETYQKISTLVIDGVAEGWAANDEISGPHYRRSRLCEPCAETFYFSITAVYMDSKGHELDNQQRTFRGDYHSHPYGELNMVIPLDEGAVLAGPLGWQGAGWTAPAPGSQHYPEVKNGALIAFFFLPAGRISYDFQAQG.

This sequence belongs to the PnbB family.

It carries out the reaction 4-hydroxylaminobenzoate + H2O + H(+) = 3,4-dihydroxybenzoate + NH4(+). Lyase involved in the degradation of nitroaromatic compounds. Catalyzes the conversion of 4-hydroxylaminobenzoate to 3,4-dihydroxybenzoate (protocatechuate). Required for the catabolism of 4-nitrotoluene. This chain is 4-hydroxylaminobenzoate lyase, found in Pseudomonas putida (Arthrobacter siderocapsulatus).